The sequence spans 303 residues: Probable serine/threonine-protein kinase FPV212 (303 aa).

In terms of domain architecture, Protein kinase spans 25–303 (WILGKQLGSG…NYESLKQMFL (279 aa)). ATP-binding positions include 31-39 (LGSGGFGLV) and K54. D160 acts as the Proton acceptor in catalysis.

This sequence belongs to the protein kinase superfamily. Ser/Thr protein kinase family. Poxviruses subfamily.

It catalyses the reaction L-seryl-[protein] + ATP = O-phospho-L-seryl-[protein] + ADP + H(+). It carries out the reaction L-threonyl-[protein] + ATP = O-phospho-L-threonyl-[protein] + ADP + H(+). The sequence is that of Probable serine/threonine-protein kinase FPV212 from Vertebrata (FPV).